Here is a 601-residue protein sequence, read N- to C-terminus: MITKVSDFLFRTFREDPATTESRGYGFLLRAGYIRQTGSGIFSWMPLGLKVRHKIENIIRYEMRQVNAIEVLFPALFSADLFKQSGRWSEYGDDIFRLKDRRQGDYLLAPTHEEAFTQMMKEICTSYRDLPRTVYQIQDKYRDELRPRAGLLRSREFSMKDAYSFDLDEKGLRQSYEAQKRAYKKIFDRLEIDYVIVKANAGAMGGSVSEEFLHPTEMGDDTFVVTADGSAFNAEVYVTLPGPAIDYSNAPEAEDCETPGVISIPDLVNHMNSSGRFIGRVIESSDCLKCLLFRIEYAEVQNGNPGNLVVKKILERGFEYIGFLVPGDRNVDLKRAQVALSPLTIEPADNRVFECNPSFVRGSIGPGLSGVFYCADPRVSSGSSWIIGANRPGVHRIGAIAGRDFSFDCTLDVSSIKTGDKSEWGPVTVKRGIEIGHLFQLGLKYSNALGLKVLDKDGYNKAVFMGSYGIGVSRLFALIAEKNCDERGLKWPAVLAPFDLHVVLLSSARAELIDSLTDCGLDVLVDDRRVSPGVKFTDAQLIGVPKIIVIGDKTRGEDVEVWDRANDQRTVLPLKEMIQGVIQRSDTGGCTERCTGVCPTR.

This sequence belongs to the class-II aminoacyl-tRNA synthetase family. ProS type 1 subfamily. As to quaternary structure, homodimer.

Its subcellular location is the cytoplasm. It catalyses the reaction tRNA(Pro) + L-proline + ATP = L-prolyl-tRNA(Pro) + AMP + diphosphate. Functionally, catalyzes the attachment of proline to tRNA(Pro) in a two-step reaction: proline is first activated by ATP to form Pro-AMP and then transferred to the acceptor end of tRNA(Pro). As ProRS can inadvertently accommodate and process non-cognate amino acids such as alanine and cysteine, to avoid such errors it has two additional distinct editing activities against alanine. One activity is designated as 'pretransfer' editing and involves the tRNA(Pro)-independent hydrolysis of activated Ala-AMP. The other activity is designated 'posttransfer' editing and involves deacylation of mischarged Ala-tRNA(Pro). The misacylated Cys-tRNA(Pro) is not edited by ProRS. The sequence is that of Proline--tRNA ligase from Tropheryma whipplei (strain TW08/27) (Whipple's bacillus).